We begin with the raw amino-acid sequence, 828 residues long: Leucine--tRNA ligase (828 aa).

Positions 36-46 match the 'HIGH' region motif; it reads PYPSGKIHIGH. Positions 595–599 match the 'KMSKS' region motif; the sequence is KMSKS. Lys-598 is an ATP binding site.

The protein belongs to the class-I aminoacyl-tRNA synthetase family.

The protein localises to the cytoplasm. The catalysed reaction is tRNA(Leu) + L-leucine + ATP = L-leucyl-tRNA(Leu) + AMP + diphosphate. This is Leucine--tRNA ligase from Rickettsia typhi (strain ATCC VR-144 / Wilmington).